We begin with the raw amino-acid sequence, 147 residues long: Transcriptional regulator MraZ (147 aa).

2 SpoVT-AbrB domains span residues 5–51 (GTPV…PQPV) and 80–123 (ACDV…DSEK).

This sequence belongs to the MraZ family. In terms of assembly, forms oligomers.

It is found in the cytoplasm. The protein resides in the nucleoid. This is Transcriptional regulator MraZ from Nitrosospira multiformis (strain ATCC 25196 / NCIMB 11849 / C 71).